The primary structure comprises 278 residues: 4-hydroxy-tetrahydrodipicolinate reductase (278 aa).

NAD(+) is bound by residues 13–18 and 111–113; these read GAAGKM and GTT. The active-site Proton donor/acceptor is the histidine 167. (S)-2,3,4,5-tetrahydrodipicolinate is bound at residue histidine 168. Lysine 171 functions as the Proton donor in the catalytic mechanism. 177 to 178 is a binding site for (S)-2,3,4,5-tetrahydrodipicolinate; the sequence is GT.

This sequence belongs to the DapB family.

It is found in the cytoplasm. The catalysed reaction is (S)-2,3,4,5-tetrahydrodipicolinate + NAD(+) + H2O = (2S,4S)-4-hydroxy-2,3,4,5-tetrahydrodipicolinate + NADH + H(+). The enzyme catalyses (S)-2,3,4,5-tetrahydrodipicolinate + NADP(+) + H2O = (2S,4S)-4-hydroxy-2,3,4,5-tetrahydrodipicolinate + NADPH + H(+). It functions in the pathway amino-acid biosynthesis; L-lysine biosynthesis via DAP pathway; (S)-tetrahydrodipicolinate from L-aspartate: step 4/4. Catalyzes the conversion of 4-hydroxy-tetrahydrodipicolinate (HTPA) to tetrahydrodipicolinate. The sequence is that of 4-hydroxy-tetrahydrodipicolinate reductase from Nostoc punctiforme (strain ATCC 29133 / PCC 73102).